Reading from the N-terminus, the 303-residue chain is Pyridoxal 5'-phosphate synthase subunit PdxS (303 aa).

D-ribose 5-phosphate is bound at residue aspartate 33. Catalysis depends on lysine 90, which acts as the Schiff-base intermediate with D-ribose 5-phosphate. Glycine 162 is a D-ribose 5-phosphate binding site. Arginine 174 serves as a coordination point for D-glyceraldehyde 3-phosphate. Residues glycine 223 and 244 to 245 (GS) contribute to the D-ribose 5-phosphate site.

Belongs to the PdxS/SNZ family. In terms of assembly, in the presence of PdxT, forms a dodecamer of heterodimers.

It catalyses the reaction aldehydo-D-ribose 5-phosphate + D-glyceraldehyde 3-phosphate + L-glutamine = pyridoxal 5'-phosphate + L-glutamate + phosphate + 3 H2O + H(+). It participates in cofactor biosynthesis; pyridoxal 5'-phosphate biosynthesis. Catalyzes the formation of pyridoxal 5'-phosphate from ribose 5-phosphate (RBP), glyceraldehyde 3-phosphate (G3P) and ammonia. The ammonia is provided by the PdxT subunit. Can also use ribulose 5-phosphate and dihydroxyacetone phosphate as substrates, resulting from enzyme-catalyzed isomerization of RBP and G3P, respectively. This Mycobacterium avium (strain 104) protein is Pyridoxal 5'-phosphate synthase subunit PdxS.